The following is a 1097-amino-acid chain: Translation initiation factor IF-2 (1097 aa).

The disordered stretch occupies residues 79-458 (LEKRVSPQAD…RVIKKKPKKA (380 aa)). The span at 97–112 (AKKEASQEKADAHAKL) shows a compositional bias: basic and acidic residues. Positions 157–173 (AATLAVEEAPIAAAPTE) are enriched in low complexity. 2 stretches are compositionally biased toward basic and acidic residues: residues 174–190 (EPMHNSEAELPESKIDS) and 202–221 (VEVHLEPKEQEVQELNHAEE). The span at 224 to 236 (TPTTEASSEETSA) shows a compositional bias: low complexity. Residues 258–267 (RKTQNTTNVS) are compositionally biased toward polar residues. The span at 268–286 (EENKQHEKQPETLKSDKAM) shows a compositional bias: basic and acidic residues. Over residues 340–363 (SDSLQAEISRQQNEISNRFSQSEN) the composition is skewed to polar residues. The segment covering 376–385 (HKKKRKRKKN) has biased composition (basic residues). Positions 402–443 (PKQEEKPVKKEKPKEREKPAAGKKEQTPGKKPVREDQKERVL) are enriched in basic and acidic residues. One can recognise a tr-type G domain in the interval 591-761 (TRPPVVTIMG…LVEAELLELK (171 aa)). The interval 600–607 (GHVDHGKT) is G1. GTP is bound at residue 600–607 (GHVDHGKT). The G2 stretch occupies residues 625–629 (GITQH). Residues 647 to 650 (DTPG) form a G3 region. GTP is bound by residues 647–651 (DTPGH) and 701–704 (NKID). The G4 stretch occupies residues 701-704 (NKID). A G5 region spans residues 737–739 (SAK).

It belongs to the TRAFAC class translation factor GTPase superfamily. Classic translation factor GTPase family. IF-2 subfamily.

The protein resides in the cytoplasm. Functionally, one of the essential components for the initiation of protein synthesis. Protects formylmethionyl-tRNA from spontaneous hydrolysis and promotes its binding to the 30S ribosomal subunits. Also involved in the hydrolysis of GTP during the formation of the 70S ribosomal complex. This Chloroherpeton thalassium (strain ATCC 35110 / GB-78) protein is Translation initiation factor IF-2.